A 482-amino-acid polypeptide reads, in one-letter code: tRNA sulfurtransferase (482 aa).

The 105-residue stretch at 61–165 (LAIRDALTRI…DDRLLLIKGR (105 aa)) folds into the THUMP domain. ATP contacts are provided by residues 183–184 (LI), lysine 265, glycine 287, and glutamine 296. An intrachain disulfide couples cysteine 344 to cysteine 456. The 79-residue stretch at 404–482 (FGANDVILDI…GFANVKVYRP (79 aa)) folds into the Rhodanese domain. Catalysis depends on cysteine 456, which acts as the Cysteine persulfide intermediate.

The protein belongs to the ThiI family.

The protein resides in the cytoplasm. It catalyses the reaction [ThiI sulfur-carrier protein]-S-sulfanyl-L-cysteine + a uridine in tRNA + 2 reduced [2Fe-2S]-[ferredoxin] + ATP + H(+) = [ThiI sulfur-carrier protein]-L-cysteine + a 4-thiouridine in tRNA + 2 oxidized [2Fe-2S]-[ferredoxin] + AMP + diphosphate. It carries out the reaction [ThiS sulfur-carrier protein]-C-terminal Gly-Gly-AMP + S-sulfanyl-L-cysteinyl-[cysteine desulfurase] + AH2 = [ThiS sulfur-carrier protein]-C-terminal-Gly-aminoethanethioate + L-cysteinyl-[cysteine desulfurase] + A + AMP + 2 H(+). It functions in the pathway cofactor biosynthesis; thiamine diphosphate biosynthesis. Catalyzes the ATP-dependent transfer of a sulfur to tRNA to produce 4-thiouridine in position 8 of tRNAs, which functions as a near-UV photosensor. Also catalyzes the transfer of sulfur to the sulfur carrier protein ThiS, forming ThiS-thiocarboxylate. This is a step in the synthesis of thiazole, in the thiamine biosynthesis pathway. The sulfur is donated as persulfide by IscS. This Salmonella typhi protein is tRNA sulfurtransferase.